A 299-amino-acid polypeptide reads, in one-letter code: Oxygen-dependent coproporphyrinogen-III oxidase (299 aa).

Ser-92 serves as a coordination point for substrate. His-96 and His-106 together coordinate a divalent metal cation. His-106 (proton donor) is an active-site residue. Residue 108-110 participates in substrate binding; sequence NVR. The a divalent metal cation site is built by His-145 and His-175. An important for dimerization region spans residues 240 to 275; the sequence is YVEFNLVWDRGTLFGLQTGGRTESILMSMPPLVRWE. 258–260 contributes to the substrate binding site; it reads GGR.

This sequence belongs to the aerobic coproporphyrinogen-III oxidase family. Homodimer. A divalent metal cation is required as a cofactor.

It is found in the cytoplasm. The enzyme catalyses coproporphyrinogen III + O2 + 2 H(+) = protoporphyrinogen IX + 2 CO2 + 2 H2O. Its pathway is porphyrin-containing compound metabolism; protoporphyrin-IX biosynthesis; protoporphyrinogen-IX from coproporphyrinogen-III (O2 route): step 1/1. Functionally, involved in the heme biosynthesis. Catalyzes the aerobic oxidative decarboxylation of propionate groups of rings A and B of coproporphyrinogen-III to yield the vinyl groups in protoporphyrinogen-IX. This chain is Oxygen-dependent coproporphyrinogen-III oxidase, found in Salmonella heidelberg (strain SL476).